A 250-amino-acid chain; its full sequence is Small ribosomal subunit protein uS3 (250 aa).

The KH type-2 domain maps to 39-111 (IRTLIKNHYP…KVQINIFEVK (73 aa)).

This sequence belongs to the universal ribosomal protein uS3 family. As to quaternary structure, part of the 30S ribosomal subunit. Forms a tight complex with proteins S10 and S14.

Functionally, binds the lower part of the 30S subunit head. Binds mRNA in the 70S ribosome, positioning it for translation. This is Small ribosomal subunit protein uS3 from Phytoplasma vitis (Flavescence doree phytoplasma).